We begin with the raw amino-acid sequence, 360 residues long: tRNA N6-adenosine threonylcarbamoyltransferase (360 aa).

Residues H111 and H115 each contribute to the Fe cation site. Substrate-binding positions include 134–138 (LVSGG), D167, G180, D184, and N279. D307 is a binding site for Fe cation.

This sequence belongs to the KAE1 / TsaD family. Requires Fe(2+) as cofactor.

The protein resides in the cytoplasm. The catalysed reaction is L-threonylcarbamoyladenylate + adenosine(37) in tRNA = N(6)-L-threonylcarbamoyladenosine(37) in tRNA + AMP + H(+). Functionally, required for the formation of a threonylcarbamoyl group on adenosine at position 37 (t(6)A37) in tRNAs that read codons beginning with adenine. Is involved in the transfer of the threonylcarbamoyl moiety of threonylcarbamoyl-AMP (TC-AMP) to the N6 group of A37, together with TsaE and TsaB. TsaD likely plays a direct catalytic role in this reaction. This Acaryochloris marina (strain MBIC 11017) protein is tRNA N6-adenosine threonylcarbamoyltransferase.